A 275-amino-acid chain; its full sequence is 3-methyl-2-oxobutanoate hydroxymethyltransferase (275 aa).

Aspartate 49 and aspartate 88 together coordinate Mg(2+). 3-methyl-2-oxobutanoate-binding positions include 49–50 (DS), aspartate 88, and lysine 118. Glutamate 120 provides a ligand contact to Mg(2+). The active-site Proton acceptor is glutamate 187.

Belongs to the PanB family. As to quaternary structure, homodecamer; pentamer of dimers. The cofactor is Mg(2+).

It is found in the cytoplasm. It carries out the reaction 3-methyl-2-oxobutanoate + (6R)-5,10-methylene-5,6,7,8-tetrahydrofolate + H2O = 2-dehydropantoate + (6S)-5,6,7,8-tetrahydrofolate. It participates in cofactor biosynthesis; (R)-pantothenate biosynthesis; (R)-pantoate from 3-methyl-2-oxobutanoate: step 1/2. In terms of biological role, catalyzes the reversible reaction in which hydroxymethyl group from 5,10-methylenetetrahydrofolate is transferred onto alpha-ketoisovalerate to form ketopantoate. This is 3-methyl-2-oxobutanoate hydroxymethyltransferase from Nitrobacter hamburgensis (strain DSM 10229 / NCIMB 13809 / X14).